The following is a 243-amino-acid chain: Adenylate dimethylallyltransferase (243 aa).

It catalyses the reaction dimethylallyl diphosphate + AMP = N(6)-(dimethylallyl)adenosine 5'-phosphate + diphosphate. In terms of biological role, transfers dimethylallyl groups to AMP as part of the biosynthesis of cytokinin phytohormones. The protein is Adenylate dimethylallyltransferase (tzs) of Agrobacterium tumefaciens (strain T37).